Here is a 516-residue protein sequence, read N- to C-terminus: Cytochrome P450 1A1 (516 aa).

The mitochondrial targeting signal stretch occupies residues 25-36 (FRPQVPKGLKSP). S63 carries O-linked (GlcNAc) serine glycosylation. Residue F220 coordinates substrate. C453 lines the heme pocket.

It belongs to the cytochrome P450 family. As to quaternary structure, interacts with cytosolic chaperones HSP70 and HSP90; this interaction is required for initial targeting to mitochondria. Interacts (via mitochondrial targeting signal) with TOMM40 (via N-terminus); this interaction is required for translocation across the mitochondrial outer membrane. Requires heme as cofactor. As to expression, constitutively expressed in liver.

It is found in the endoplasmic reticulum membrane. The protein localises to the mitochondrion inner membrane. The protein resides in the microsome membrane. Its subcellular location is the cytoplasm. It catalyses the reaction an organic molecule + reduced [NADPH--hemoprotein reductase] + O2 = an alcohol + oxidized [NADPH--hemoprotein reductase] + H2O + H(+). It carries out the reaction estrone + reduced [NADPH--hemoprotein reductase] + O2 = 2-hydroxyestrone + oxidized [NADPH--hemoprotein reductase] + H2O + H(+). The catalysed reaction is estrone + reduced [NADPH--hemoprotein reductase] + O2 = 4-hydroxyestrone + oxidized [NADPH--hemoprotein reductase] + H2O + H(+). The enzyme catalyses estrone + reduced [NADPH--hemoprotein reductase] + O2 = 6alpha-hydroxyestrone + oxidized [NADPH--hemoprotein reductase] + H2O + H(+). It catalyses the reaction estrone + reduced [NADPH--hemoprotein reductase] + O2 = 15alpha-hydroxyestrone + oxidized [NADPH--hemoprotein reductase] + H2O + H(+). It carries out the reaction estrone + reduced [NADPH--hemoprotein reductase] + O2 = 16alpha-hydroxyestrone + oxidized [NADPH--hemoprotein reductase] + H2O + H(+). The catalysed reaction is 17beta-estradiol + reduced [NADPH--hemoprotein reductase] + O2 = 2-hydroxy-17beta-estradiol + oxidized [NADPH--hemoprotein reductase] + H2O + H(+). The enzyme catalyses 17beta-estradiol + reduced [NADPH--hemoprotein reductase] + O2 = 4-hydroxy-17beta-estradiol + oxidized [NADPH--hemoprotein reductase] + H2O + H(+). It catalyses the reaction 17beta-estradiol + reduced [NADPH--hemoprotein reductase] + O2 = 6alpha-hydroxy-17beta-estradiol + oxidized [NADPH--hemoprotein reductase] + H2O + H(+). It carries out the reaction 17beta-estradiol + reduced [NADPH--hemoprotein reductase] + O2 = 7alpha-hydroxy-17beta-estradiol + oxidized [NADPH--hemoprotein reductase] + H2O + H(+). The catalysed reaction is 17beta-estradiol + reduced [NADPH--hemoprotein reductase] + O2 = 15alpha-hydroxy-17beta-estradiol + oxidized [NADPH--hemoprotein reductase] + H2O + H(+). The enzyme catalyses (5Z,8Z,11Z)-eicosatrienoate + reduced [NADPH--hemoprotein reductase] + O2 = 19-hydroxy-(5Z,8Z,11Z)-eicosatrienoate + oxidized [NADPH--hemoprotein reductase] + H2O + H(+). It catalyses the reaction (5Z,8Z,11Z,14Z)-eicosatetraenoate + reduced [NADPH--hemoprotein reductase] + O2 = 16-hydroxy-(5Z,8Z,11Z,14Z)-eicosatetraenoate + oxidized [NADPH--hemoprotein reductase] + H2O + H(+). It carries out the reaction (5Z,8Z,11Z,14Z)-eicosatetraenoate + reduced [NADPH--hemoprotein reductase] + O2 = 17-hydroxy-(5Z,8Z,11Z,14Z)-eicosatetraenoate + oxidized [NADPH--hemoprotein reductase] + H2O + H(+). The catalysed reaction is (5Z,8Z,11Z,14Z)-eicosatetraenoate + reduced [NADPH--hemoprotein reductase] + O2 = 18-hydroxy-(5Z,8Z,11Z,14Z)-eicosatetraenoate + oxidized [NADPH--hemoprotein reductase] + H2O + H(+). The enzyme catalyses (5Z,8Z,11Z,14Z)-eicosatetraenoate + reduced [NADPH--hemoprotein reductase] + O2 = 19-hydroxy-(5Z,8Z,11Z,14Z)-eicosatetraenoate + oxidized [NADPH--hemoprotein reductase] + H2O + H(+). It catalyses the reaction (5Z,8Z,11Z,14Z,17Z)-eicosapentaenoate + reduced [NADPH--hemoprotein reductase] + O2 = 19-hydroxy-(5Z,8Z,11Z,14Z,17Z)-eicosapentaenoate + oxidized [NADPH--hemoprotein reductase] + H2O + H(+). It carries out the reaction (5Z,8Z,11Z,14Z)-eicosatetraenoate + reduced [NADPH--hemoprotein reductase] + O2 = (8R,9S)-epoxy-(5Z,11Z,14Z)-eicosatrienoate + oxidized [NADPH--hemoprotein reductase] + H2O + H(+). The catalysed reaction is (5Z,8Z,11Z,14Z)-eicosatetraenoate + reduced [NADPH--hemoprotein reductase] + O2 = (11R,12S)-epoxy-(5Z,8Z,14Z)-eicosatrienoate + oxidized [NADPH--hemoprotein reductase] + H2O + H(+). The enzyme catalyses (5Z,8Z,11Z,14Z)-eicosatetraenoate + reduced [NADPH--hemoprotein reductase] + O2 = (14S,15R)-epoxy-(5Z,8Z,11Z)-eicosatrienoate + oxidized [NADPH--hemoprotein reductase] + H2O + H(+). It catalyses the reaction (5Z,8Z,11Z,14Z)-eicosatetraenoate + reduced [NADPH--hemoprotein reductase] + O2 = (14R,15S)-epoxy-(5Z,8Z,11Z)-eicosatrienoate + oxidized [NADPH--hemoprotein reductase] + H2O + H(+). It carries out the reaction (5Z,8Z,11Z,14Z,17Z)-eicosapentaenoate + reduced [NADPH--hemoprotein reductase] + O2 = (17R,18S)-epoxy-(5Z,8Z,11Z,14Z)-eicosatetraenoate + oxidized [NADPH--hemoprotein reductase] + H2O + H(+). The catalysed reaction is (4Z,7Z,10Z,13Z,16Z,19Z)-docosahexaenoate + reduced [NADPH--hemoprotein reductase] + O2 = (19S,20R)-epoxy-(4Z,7Z,10Z,13Z,16Z)-docosapentaenoate + oxidized [NADPH--hemoprotein reductase] + H2O + H(+). The enzyme catalyses (4Z,7Z,10Z,13Z,16Z,19Z)-docosahexaenoate + reduced [NADPH--hemoprotein reductase] + O2 = (19R,20S)-epoxy-(4Z,7Z,10Z,13Z,16Z)-docosapentaenoate + oxidized [NADPH--hemoprotein reductase] + H2O + H(+). It catalyses the reaction all-trans-retinol + reduced [NADPH--hemoprotein reductase] + O2 = all-trans-retinal + oxidized [NADPH--hemoprotein reductase] + 2 H2O + H(+). It carries out the reaction all-trans-retinal + reduced [NADPH--hemoprotein reductase] + O2 = all-trans-retinoate + oxidized [NADPH--hemoprotein reductase] + H2O + 2 H(+). The catalysed reaction is (13S)-hydroperoxy-(9Z,11E)-octadecadienoate = 13-oxo-(9Z,11E)-octadecadienoate + H2O. The enzyme catalyses (12S)-hydroperoxy-(5Z,8Z,10E,14Z)-eicosatetraenoate = 12-oxo-(5Z,8Z,10E,14Z)-eicosatetraenoate + H2O. It catalyses the reaction (15S)-hydroperoxy-(5Z,8Z,11Z,13E)-eicosatetraenoate = 15-oxo-(5Z,8Z,11Z,13E)-eicosatetraenoate + H2O. It carries out the reaction (5S)-hydroperoxy-(6E,8Z,11Z,14Z)-eicosatetraenoate = 5-oxo-(6E,8Z,11Z,14Z)-eicosatetraenoate + H2O. Its pathway is steroid hormone biosynthesis. The protein operates within lipid metabolism; fatty acid metabolism. It participates in cofactor metabolism; retinol metabolism. Functionally, a cytochrome P450 monooxygenase involved in the metabolism of various endogenous substrates, including fatty acids, steroid hormones and vitamins. Mechanistically, uses molecular oxygen inserting one oxygen atom into a substrate, and reducing the second into a water molecule, with two electrons provided by NADPH via cytochrome P450 reductase (CPR; NADPH-ferrihemoprotein reductase). Catalyzes the hydroxylation of carbon-hydrogen bonds. Exhibits high catalytic activity for the formation of hydroxyestrogens from estrone (E1) and 17beta-estradiol (E2), namely 2-hydroxy E1 and E2, as well as D-ring hydroxylated E1 and E2 at the C15alpha and C16alpha positions. Displays different regioselectivities for polyunsaturated fatty acids (PUFA) hydroxylation. Catalyzes the epoxidation of double bonds of certain PUFA. Converts arachidonic acid toward epoxyeicosatrienoic acid (EET) regioisomers, 8,9-, 11,12-, and 14,15-EET, that function as lipid mediators in the vascular system. Displays an absolute stereoselectivity in the epoxidation of eicosapentaenoic acid (EPA) producing the 17(R),18(S) enantiomer. May play an important role in all-trans retinoic acid biosynthesis in extrahepatic tissues. Catalyzes two successive oxidative transformation of all-trans retinol to all-trans retinal and then to the active form all-trans retinoic acid. May also participate in eicosanoids metabolism by converting hydroperoxide species into oxo metabolites (lipoxygenase-like reaction, NADPH-independent). The chain is Cytochrome P450 1A1 (CYP1A1) from Cavia porcellus (Guinea pig).